We begin with the raw amino-acid sequence, 64 residues long: Cytotoxin homolog S4C8 (64 aa).

4 disulfides stabilise this stretch: C3–C22, C15–C40, C44–C56, and C57–C62.

Belongs to the three-finger toxin family. Short-chain subfamily. Orphan group XIII sub-subfamily. Expressed by the venom gland.

The protein localises to the secreted. In Aspidelaps scutatus (Shield-nose snake), this protein is Cytotoxin homolog S4C8.